Consider the following 80-residue polypeptide: Cortexin-3 (80 aa).

Residues 28-48 traverse the membrane as a helical segment; sequence TTFVFVILLFIFLGILIVRCF.

Belongs to the cortexin family.

The protein resides in the membrane. This Mus musculus (Mouse) protein is Cortexin-3 (Ctxn3).